A 296-amino-acid polypeptide reads, in one-letter code: Cell surface glycoprotein CD200 receptor 3 (296 aa).

The signal sequence occupies residues 1-25; the sequence is MHALGRTLALMLLIFITILVPESSC. Over 26–245 the chain is Extracellular; that stretch reads SVKGREEIPP…NRGTTSILPS (220 aa). In terms of domain architecture, Ig-like V-type spans 48 to 162; it reads PDGVGVTMEI…GIFQERHSIQ (115 aa). The cysteines at positions 75 and 146 are disulfide-linked. In terms of domain architecture, Ig-like C2-type spans 151–232; that stretch reads TDGIFQERHS…SHLTDNWILS (82 aa). Residues asparagine 167 and asparagine 199 are each glycosylated (N-linked (GlcNAc...) asparagine). Cysteine 172 and cysteine 220 form a disulfide bridge. A helical transmembrane segment spans residues 246 to 266; that stretch reads LLSILYVKLAVTVLIVGFAFF. The Cytoplasmic portion of the chain corresponds to 267–296; the sequence is QKRNYFSSRDLVFMKERRSKRSVWQREALG.

This sequence belongs to the CD200R family. In terms of assembly, isoform 3 interacts with TYROBP. Isoform 8 does not interact with TYROBP. Expressed in uterus and bone marrow-derived mast cells (at protein level). Expressed in uterus, spleen, bone marrow-derived dendritic, basophil and mast cells. Expressed in the lung of N.brasiliensis-infected mice. Weakly expressed in brain, testis, lung and thymus.

Its subcellular location is the membrane. Functionally, according to PubMed:15187158 isoform 4 is a receptor for the CD200 cell surface glycoprotein. According to PubMed:16081818 isoform 4 is not a receptor for the CD200/OX2 cell surface glycoprotein. Isoform 1, isoform 2 and isoform 3 are involved in the recruitment or surface expression of the TYROBP receptor. Isoform 6, isoform 7 and isoform 8 are not involved in the recruitment or surface expression of the TYROBP receptor. This Mus musculus (Mouse) protein is Cell surface glycoprotein CD200 receptor 3 (Cd200r3).